Reading from the N-terminus, the 290-residue chain is 33 kDa chaperonin (290 aa).

Disulfide bonds link cysteine 235/cysteine 237 and cysteine 268/cysteine 271.

This sequence belongs to the HSP33 family. Under oxidizing conditions two disulfide bonds are formed involving the reactive cysteines. Under reducing conditions zinc is bound to the reactive cysteines and the protein is inactive.

Its subcellular location is the cytoplasm. Functionally, redox regulated molecular chaperone. Protects both thermally unfolding and oxidatively damaged proteins from irreversible aggregation. Plays an important role in the bacterial defense system toward oxidative stress. This Streptococcus equi subsp. zooepidemicus (strain MGCS10565) protein is 33 kDa chaperonin.